The primary structure comprises 444 residues: MSQRTEHNGSWLRNAGSLLSVLACVAVLASPASATPASAAAAAAPRTDDYLKRAERILKFTPLIDGHNDLPNFIRKTTKNQIYEGKIPFEDELPGHTDLKRLRKGRVGGQFWSVYTPCPDPPVPIDNPTWSVRDTLEQIDVTKRLIEKYSRDLQFCGDARCARRAFRRGKIASFLGIEGGHQIGNSLGDLRRVYELGVRYITVTHNCDNAFATAQSTVADGLPDTGLMKPFGIEFVKEMNRLGMLVDLSHVSANTMRDTLKVARAPVIFSHSSAYAVSNHLRNVPDDVLKEVAKNNGVVMVTFVSRFVNVENPDAADINTVVDHIFHIAKVAGWDHVGIGGDYDGTVYLPKGLEDVSKYPHLIARVLERGATTQQVRKLVGENILRVWTEVERIAKRLQKTELPNEAYWEGRNWTRPAKRDLNADFEGRSVPLFTSASNGDFCD.

Positions 1 to 34 are cleaved as a signal peptide; the sequence is MSQRTEHNGSWLRNAGSLLSVLACVAVLASPASA. Residues H67, D69, and E178 each contribute to the Zn(2+) site. Cysteines 118 and 207 form a disulfide. H205 serves as a coordination point for substrate. Zn(2+) contacts are provided by H250 and H271. Positions 282 and 342 each coordinate substrate. N-linked (GlcNAc...) asparagine glycosylation occurs at N413.

This sequence belongs to the metallo-dependent hydrolases superfamily. Peptidase M19 family. Requires Zn(2+) as cofactor.

The enzyme catalyses an L-aminoacyl-L-amino acid + H2O = 2 an L-alpha-amino acid. Its function is as follows. Hydrolyzes a wide range of dipeptides. The protein is Putative dipeptidase CPC735_015490 of Coccidioides posadasii (strain C735) (Valley fever fungus).